We begin with the raw amino-acid sequence, 269 residues long: 4-hydroxy-tetrahydrodipicolinate reductase (269 aa).

NAD(+) is bound by residues 9 to 14 (GAGGRM) and glutamate 35. Residue arginine 36 coordinates NADP(+). NAD(+) is bound by residues 98–100 (GTT) and 122–125 (ASNY). The active-site Proton donor/acceptor is histidine 155. Residue histidine 156 coordinates (S)-2,3,4,5-tetrahydrodipicolinate. The active-site Proton donor is the lysine 159. 165-166 (GT) is a (S)-2,3,4,5-tetrahydrodipicolinate binding site.

The protein belongs to the DapB family.

It is found in the cytoplasm. It carries out the reaction (S)-2,3,4,5-tetrahydrodipicolinate + NAD(+) + H2O = (2S,4S)-4-hydroxy-2,3,4,5-tetrahydrodipicolinate + NADH + H(+). It catalyses the reaction (S)-2,3,4,5-tetrahydrodipicolinate + NADP(+) + H2O = (2S,4S)-4-hydroxy-2,3,4,5-tetrahydrodipicolinate + NADPH + H(+). It functions in the pathway amino-acid biosynthesis; L-lysine biosynthesis via DAP pathway; (S)-tetrahydrodipicolinate from L-aspartate: step 4/4. Its function is as follows. Catalyzes the conversion of 4-hydroxy-tetrahydrodipicolinate (HTPA) to tetrahydrodipicolinate. In Actinobacillus pleuropneumoniae serotype 3 (strain JL03), this protein is 4-hydroxy-tetrahydrodipicolinate reductase.